The primary structure comprises 753 residues: 5-methyltetrahydropteroyltriglutamate--homocysteine methyltransferase (753 aa).

5-methyltetrahydropteroyltri-L-glutamate contacts are provided by residues 17–20 and lysine 117; that span reads RELK. Residues 431–433 and glutamate 484 contribute to the L-homocysteine site; that span reads IGS. L-methionine is bound by residues 431–433 and glutamate 484; that span reads IGS. 5-methyltetrahydropteroyltri-L-glutamate is bound by residues 515-516 and tryptophan 561; that span reads RC. Aspartate 599 contacts L-homocysteine. Aspartate 599 contacts L-methionine. Residue glutamate 605 participates in 5-methyltetrahydropteroyltri-L-glutamate binding. Zn(2+) contacts are provided by histidine 641, cysteine 643, and glutamate 665. Catalysis depends on histidine 694, which acts as the Proton donor. Residue cysteine 726 participates in Zn(2+) binding.

It belongs to the vitamin-B12 independent methionine synthase family. Requires Zn(2+) as cofactor.

The enzyme catalyses 5-methyltetrahydropteroyltri-L-glutamate + L-homocysteine = tetrahydropteroyltri-L-glutamate + L-methionine. It functions in the pathway amino-acid biosynthesis; L-methionine biosynthesis via de novo pathway; L-methionine from L-homocysteine (MetE route): step 1/1. In terms of biological role, catalyzes the transfer of a methyl group from 5-methyltetrahydrofolate to homocysteine resulting in methionine formation. The sequence is that of 5-methyltetrahydropteroyltriglutamate--homocysteine methyltransferase from Klebsiella pneumoniae (strain 342).